A 212-amino-acid chain; its full sequence is Nodulation protein NolU (212 aa).

Regulates cultivar-specific nodulation of soybean. This chain is Nodulation protein NolU (nolU), found in Rhizobium fredii (Sinorhizobium fredii).